We begin with the raw amino-acid sequence, 323 residues long: MTQLRSHPRLVRKLQDSLGDQLCVALDDATVVEIMLNPDGRLFIERLGHGVVAAGAMTPAAAEVVIGSVAHALQSEADDERPIISGELPIGGHRFEGLLPPIVSGPAFTIRRRASRLIPLDDYVTSKVMTEAQASAIRSAIDSRMNIVISGGTGSGKTTLANAIIAEIVTAAPDDRLVILEDTAEIQCAAENAVSLHTSDTVDMARLLKSTMRLRPDRIIVGEVRDGAALTLLKAWNTGHPGGVTTIHSNTALSALRRLEQLTAEASQQLMQEVIGEAVDLIVSIERSGKGRRVREVIHIEGYRNNHYQTEHYAQIEEDSHVA.

ATP is bound at residue 151 to 158; the sequence is GGTGSGKT.

It belongs to the GSP E family.

It localises to the cytoplasm. The polypeptide is Conjugal transfer protein TrbB (trbB) (Rhizobium radiobacter (Agrobacterium tumefaciens)).